We begin with the raw amino-acid sequence, 761 residues long: Xaa-Pro dipeptidyl-peptidase (761 aa).

Residues serine 347, aspartate 467, and histidine 497 each act as charge relay system in the active site.

This sequence belongs to the peptidase S15 family. As to quaternary structure, homodimer.

The protein resides in the cytoplasm. The enzyme catalyses Hydrolyzes Xaa-Pro-|- bonds to release unblocked, N-terminal dipeptides from substrates including Ala-Pro-|-p-nitroanilide and (sequentially) Tyr-Pro-|-Phe-Pro-|-Gly-Pro-|-Ile.. Removes N-terminal dipeptides sequentially from polypeptides having unsubstituted N-termini provided that the penultimate residue is proline. This Streptococcus agalactiae serotype III (strain NEM316) protein is Xaa-Pro dipeptidyl-peptidase.